The following is a 234-amino-acid chain: Probable transcriptional regulatory protein PFL_3960 (234 aa).

This sequence belongs to the TACO1 family.

It localises to the cytoplasm. The chain is Probable transcriptional regulatory protein PFL_3960 from Pseudomonas fluorescens (strain ATCC BAA-477 / NRRL B-23932 / Pf-5).